Here is a 72-residue protein sequence, read N- to C-terminus: Teretoxin Tan11.1 (72 aa).

An N-terminal signal peptide occupies residues 1-21 (MLATKMSVTFCFLLMLTTVML). The propeptide occupies 22-31 (PTEAKTVAGR).

It belongs to the teretoxin H (TH) superfamily. Contains 4 disulfide bonds. Expressed by the venom duct.

Its subcellular location is the secreted. The chain is Teretoxin Tan11.1 from Terebra anilis (Auger snail).